Consider the following 2067-residue polypeptide: Nuclear receptor coactivator 6 (2067 aa).

Residues 1-932 are TBP/GTF2A-binding region; that stretch reads MVLDDLPNFE…PPRKKKNCHQ (932 aa). Residues 1-1060 are CREBBP-binding region; the sequence is MVLDDLPNFE…LPVSQNVHPP (1060 aa). The NCOA1-binding region stretch occupies residues 1-1314; that stretch reads MVLDDLPNFE…QAHKLDSVVV (1314 aa). Asymmetric dimethylarginine is present on Arg-95. Disordered regions lie at residues 181–253 and 293–548; these read AVMT…RQMN and TRPL…PGNS. Positions 293 to 304 are enriched in low complexity; that stretch reads TRPLQQHQQQPQ. Composition is skewed to polar residues over residues 338 to 347, 357 to 372, 383 to 405, 421 to 457, 465 to 506, and 526 to 548; these read SLGTMTTNQG, MQAQ…TVQT, GSQQ…QFTA, PLQQ…QQQM, NPLS…QGPQ, and GQAN…PGNS. Positions 777–931 are NCOA6IP-binding region; it reads VNNSPSQVMG…KPPRKKKNCH (155 aa). Residue Ser-888 is modified to Phosphoserine. The LXXLL motif 1 motif lies at 891-895; it reads LVNLL. Disordered regions lie at residues 903-1279, 1313-1358, 1424-1481, 1497-1581, and 1769-1822; these read HFGV…QGLN, VVNS…APKL, NIPQ…EENK, QLLD…IPPV, and LNPD…GKGK. Residues 907–916 show a composition bias toward low complexity; the sequence is NNKQNNTNAN. Basic residues predominate over residues 917 to 929; that stretch reads KPKKKKPPRKKKN. Positions 984–996 are enriched in low complexity; sequence QRPLPQMPPQLMQ. The segment covering 999–1024 has biased composition (pro residues); the sequence is APPPQPPQQQPQPQLPQQQQPPPPSQ. Residues 1025-1044 show a composition bias toward low complexity; the sequence is PQSQQQQQQQQMMMMLMMQQ. Asymmetric dimethylarginine is present on residues Arg-1050 and Arg-1061. Polar residues predominate over residues 1066–1078; sequence PDSQRMPVQQSGN. At Arg-1099 the chain carries Asymmetric dimethylarginine. Polar residues predominate over residues 1103-1123; sequence SVNTPMGSNSRKMVYQENPQN. Low complexity predominate over residues 1124 to 1137; the sequence is SSSSPLGEMSSLPE. Composition is skewed to polar residues over residues 1152-1165, 1176-1194, and 1205-1217; these read NMPS…NQLM, LSAT…SLPS, and APTQ…TPNR. Pro residues predominate over residues 1222 to 1235; that stretch reads PYYPQTPNNRPPST. Residues 1313 to 1324 show a composition bias toward polar residues; sequence VVNSGKQSNPGT. The segment covering 1326-1349 has biased composition (low complexity); it reads KRASPSNSRRSSPGSSRKTTPSPG. Polar residues predominate over residues 1424–1435; it reads NIPQDSDCQNAQ. Residues 1495–1499 carry the LXXLL motif 2 motif; sequence LSQLL. Low complexity predominate over residues 1545 to 1562; sequence EPSTSLSSPHSSEPCSTL. An EP300/CRSP3-binding region region spans residues 1644–2067; it reads SEGQSAAQSN…AVQSKRRKSK (424 aa). The segment covering 1775 to 1805 has biased composition (polar residues); the sequence is SPQTNTSADQSTLPPSQPTTVVSSLLTNSPG. The segment covering 1806-1818 has biased composition (low complexity); that stretch reads SSANRRSPVSSSK. N6-acetyllysine occurs at positions 1822 and 1825. 2 disordered regions span residues 1840–1911 and 1957–2067; these read GSLE…LPGG and VGSH…RKSK. Positions 1871-1883 are enriched in polar residues; sequence EQCSTELDSKTPT. Residues 1892–1904 are compositionally biased toward low complexity; the sequence is MTSSPMAPSSTST. A compositionally biased stretch (basic and acidic residues) spans 2005 to 2014; sequence EPKEIVEKSK. Ser-2022 carries the phosphoserine modification.

As to quaternary structure, monomer and homodimer. Interacts in vitro with the basal transcription factors GTF2A and TBP, suggesting an autonomous transactivation function. Interacts with NCOA1, CRSP3, RBM14, the histone acetyltransferase proteins EP300 and CREBBP, and with methyltransferase proteins NCOA6IP and PRMT2. Interacts with RBM39. Component of the MLL2/3 complex (also named ASCOM complex), at least composed of KMT2D/MLL2 or KMT2C/MLL3, ASH2L, RBBP5, WDR5, NCOA6, DPY30, KDM6A, PAXIP1/PTIP, PAGR1 and alpha- and beta-tubulin. Interacts with ZNF335; may enhance ligand-dependent transcriptional activation by nuclear hormone receptors. Phosphorylated. As to expression, widely expressed. High expression in testis and weak expression in small intestine.

Its subcellular location is the nucleus. In terms of biological role, nuclear receptor coactivator that directly binds nuclear receptors and stimulates the transcriptional activities in a hormone-dependent fashion. Coactivates expression in an agonist- and AF2-dependent manner. Involved in the coactivation of different nuclear receptors, such as for steroids (GR and ERs), retinoids (RARs and RXRs), thyroid hormone (TRs), vitamin D3 (VDR) and prostanoids (PPARs). Probably functions as a general coactivator, rather than just a nuclear receptor coactivator. May also be involved in the coactivation of the NF-kappa-B pathway. May coactivate expression via a remodeling of chromatin and its interaction with histone acetyltransferase proteins. Involved in placental, cardiac, hepatic and embryonic development. This chain is Nuclear receptor coactivator 6 (Ncoa6), found in Mus musculus (Mouse).